A 250-amino-acid chain; its full sequence is Probable transcriptional regulatory protein Paes_0496 (250 aa).

Belongs to the TACO1 family.

It localises to the cytoplasm. This chain is Probable transcriptional regulatory protein Paes_0496, found in Prosthecochloris aestuarii (strain DSM 271 / SK 413).